Consider the following 198-residue polypeptide: Holliday junction resolvase RecU (198 aa).

A disordered region spans residues 1 to 21 (MVNYPHKLSSQKRQPSLSQPK). Polar residues predominate over residues 11 to 21 (QKRQPSLSQPK). Mg(2+) contacts are provided by T81, D83, E96, and Q115.

Belongs to the RecU family. Mg(2+) serves as cofactor.

Its subcellular location is the cytoplasm. The enzyme catalyses Endonucleolytic cleavage at a junction such as a reciprocal single-stranded crossover between two homologous DNA duplexes (Holliday junction).. Functionally, endonuclease that resolves Holliday junction intermediates in genetic recombination. Cleaves mobile four-strand junctions by introducing symmetrical nicks in paired strands. Promotes annealing of linear ssDNA with homologous dsDNA. Required for DNA repair, homologous recombination and chromosome segregation. The protein is Holliday junction resolvase RecU of Streptococcus pneumoniae (strain Taiwan19F-14).